A 407-amino-acid chain; its full sequence is MPKNVTVIGAGLAGSEATWQLAKRGIHVDLYEMRPQKETPAHETGEFAELVCTNSMRSNQLSNAVGLLKEEMRHLDSLIMKAADKTQVPAGGALAVDRDSFSKYVTDTLRGLDNVTVHEEEITEIPEDGITIIATGPLTSDALAEQIQKFSGTDSLHFFDAAAPIVAADSIDMNIVYKKSRYDRGEAAYLNCPMNKEQYENFTRELIKAETAQLHGFEKNDVFEGCMPIEVMAARGAKTMLFGPLKPVGLEDPHTGETPYAVVQLRQDNAAASMYNIVGFQTHLKYGEQKRVFSMIPGLENARFVRYGKMHRNTYMASPDVLTASYEAKKRPGLFFAGQMTGVEGYVESAGSGLVAGVNAAREALGEEPIAFPKDTALGSMANYVTTTSAKHFPPMNASLHFYLLGK.

9 to 14 (GAGLAG) is an FAD binding site.

The protein belongs to the MnmG family. TrmFO subfamily. It depends on FAD as a cofactor.

It localises to the cytoplasm. It catalyses the reaction uridine(54) in tRNA + (6R)-5,10-methylene-5,6,7,8-tetrahydrofolate + NADH + H(+) = 5-methyluridine(54) in tRNA + (6S)-5,6,7,8-tetrahydrofolate + NAD(+). It carries out the reaction uridine(54) in tRNA + (6R)-5,10-methylene-5,6,7,8-tetrahydrofolate + NADPH + H(+) = 5-methyluridine(54) in tRNA + (6S)-5,6,7,8-tetrahydrofolate + NADP(+). In terms of biological role, catalyzes the folate-dependent formation of 5-methyl-uridine at position 54 (M-5-U54) in all tRNAs. In Lactobacillus helveticus (strain DPC 4571), this protein is Methylenetetrahydrofolate--tRNA-(uracil-5-)-methyltransferase TrmFO.